We begin with the raw amino-acid sequence, 467 residues long: 3-isopropylmalate dehydratase large subunit (467 aa).

Cysteine 347, cysteine 407, and cysteine 410 together coordinate [4Fe-4S] cluster.

This sequence belongs to the aconitase/IPM isomerase family. LeuC type 1 subfamily. Heterodimer of LeuC and LeuD. [4Fe-4S] cluster serves as cofactor.

It carries out the reaction (2R,3S)-3-isopropylmalate = (2S)-2-isopropylmalate. The protein operates within amino-acid biosynthesis; L-leucine biosynthesis; L-leucine from 3-methyl-2-oxobutanoate: step 2/4. In terms of biological role, catalyzes the isomerization between 2-isopropylmalate and 3-isopropylmalate, via the formation of 2-isopropylmaleate. The polypeptide is 3-isopropylmalate dehydratase large subunit (Trichormus variabilis (strain ATCC 29413 / PCC 7937) (Anabaena variabilis)).